The primary structure comprises 489 residues: Mitochondrial distribution and morphology protein 10 (489 aa).

It belongs to the MDM10 family. Component of the ER-mitochondria encounter structure (ERMES) or MDM complex, composed of MMM1, MDM10, MDM12 and MDM34. Associates with the mitochondrial outer membrane sorting assembly machinery SAM(core) complex.

It localises to the mitochondrion outer membrane. In terms of biological role, component of the ERMES/MDM complex, which serves as a molecular tether to connect the endoplasmic reticulum and mitochondria. Components of this complex are involved in the control of mitochondrial shape and protein biogenesis and may function in phospholipid exchange. MDM10 is involved in the late assembly steps of the general translocase of the mitochondrial outer membrane (TOM complex). Functions in the TOM40-specific route of the assembly of outer membrane beta-barrel proteins, including the association of TOM40 with the receptor TOM22 and small TOM proteins. Can associate with the SAM(core) complex as well as the MDM12-MMM1 complex, both involved in late steps of the major beta-barrel assembly pathway, that is responsible for biogenesis of all outer membrane beta-barrel proteins. May act as a switch that shuttles between both complexes and channels precursor proteins into the TOM40-specific pathway. Plays a role in mitochondrial morphology and in the inheritance of mitochondria. The chain is Mitochondrial distribution and morphology protein 10 from Arthroderma otae (strain ATCC MYA-4605 / CBS 113480) (Microsporum canis).